A 311-amino-acid polypeptide reads, in one-letter code: HTH-type transcriptional regulator DsdC (311 aa).

Positions Trp-15–Thr-72 constitute an HTH lysR-type domain. Residues Phe-32 to Asn-51 constitute a DNA-binding region (H-T-H motif).

It belongs to the LysR transcriptional regulatory family.

Functionally, regulates the expression of the dsdX-dsdA operon. The chain is HTH-type transcriptional regulator DsdC from Escherichia coli (strain K12).